The chain runs to 324 residues: Polyketide biosynthesis acyltransferase homolog PksD (324 aa).

Ser-99 is a catalytic residue.

It is found in the cytoplasm. It functions in the pathway antibiotic biosynthesis; bacillaene biosynthesis. Its function is as follows. Probably involved in some intermediate steps for the synthesis of the antibiotic polyketide bacillaene which is involved in secondary metabolism. The polypeptide is Polyketide biosynthesis acyltransferase homolog PksD (pksD) (Bacillus subtilis (strain 168)).